Consider the following 105-residue polypeptide: Large ribosomal subunit protein uL24 (105 aa).

Belongs to the universal ribosomal protein uL24 family. In terms of assembly, part of the 50S ribosomal subunit.

In terms of biological role, one of two assembly initiator proteins, it binds directly to the 5'-end of the 23S rRNA, where it nucleates assembly of the 50S subunit. One of the proteins that surrounds the polypeptide exit tunnel on the outside of the subunit. This chain is Large ribosomal subunit protein uL24, found in Pseudothermotoga lettingae (strain ATCC BAA-301 / DSM 14385 / NBRC 107922 / TMO) (Thermotoga lettingae).